The chain runs to 71 residues: Non-structural protein 3x (71 aa).

The protein is Non-structural protein 3x of Feline coronavirus (strain FIPV WSU-79/1146) (FCoV).